Consider the following 467-residue polypeptide: Sodium-dependent phosphate transport protein 1 (467 aa).

3 N-linked (GlcNAc...) asparagine glycosylation sites follow: N41, N49, and N58. A run of 10 helical transmembrane segments spans residues 81–101 (GIILSSTSYGVIIIQVPVGYF), 119–139 (SVLSLLIPPAAGIGVAWVVVC), 178–198 (FLLGPFIVLLVTGVICESLGW), 200–220 (MVFYIFGACGCAVCLLWFVLF), 257–277 (AILKSLPVWAISTGSFTFFWS), 301–321 (GFLSSLPYLFAWICGNLAGQL), 339–359 (LFTAAGFLLPAIFGVCLPYLS), 365–385 (IVIFLILAGATGSFCLGGVFI), 401–421 (CSTLTGMIGGLIASTLTGLIL), and 433–453 (FILMAAINVTGLIFYLIVATA).

It belongs to the major facilitator superfamily. Sodium/anion cotransporter family. As to quaternary structure, interacts with PDZK1. In terms of tissue distribution, expressed in kidney cortex, liver and brain but not in other tissues.

The protein localises to the apical cell membrane. The enzyme catalyses 3 Na(+)(out) + phosphate(out) = 3 Na(+)(in) + phosphate(in). It catalyses the reaction urate(out) = urate(in). Important for the resorption of phosphate by the kidney. May be involved in actively transporting phosphate into cells via Na(+) cotransport in the renal brush border membrane. Plays a role in urate transport in the kidney. The polypeptide is Sodium-dependent phosphate transport protein 1 (SLC17A1) (Homo sapiens (Human)).